Here is a 184-residue protein sequence, read N- to C-terminus: Large ribosomal subunit protein uL22B (184 aa).

A Glycyl lysine isopeptide (Lys-Gly) (interchain with G-Cter in ubiquitin) cross-link involves residue K46. Residue T70 is modified to Phosphothreonine.

This sequence belongs to the universal ribosomal protein uL22 family. As to quaternary structure, component of the large ribosomal subunit (LSU). Mature yeast ribosomes consist of a small (40S) and a large (60S) subunit. The 40S small subunit contains 1 molecule of ribosomal RNA (18S rRNA) and 33 different proteins (encoded by 57 genes). The large 60S subunit contains 3 rRNA molecules (25S, 5.8S and 5S rRNA) and 46 different proteins (encoded by 81 genes). uL22 is associated with the polypeptide exit tunnel.

The protein resides in the cytoplasm. In terms of biological role, component of the ribosome, a large ribonucleoprotein complex responsible for the synthesis of proteins in the cell. The small ribosomal subunit (SSU) binds messenger RNAs (mRNAs) and translates the encoded message by selecting cognate aminoacyl-transfer RNA (tRNA) molecules. The large subunit (LSU) contains the ribosomal catalytic site termed the peptidyl transferase center (PTC), which catalyzes the formation of peptide bonds, thereby polymerizing the amino acids delivered by tRNAs into a polypeptide chain. The nascent polypeptides leave the ribosome through a tunnel in the LSU and interact with protein factors that function in enzymatic processing, targeting, and the membrane insertion of nascent chains at the exit of the ribosomal tunnel. The sequence is that of Large ribosomal subunit protein uL22B from Saccharomyces cerevisiae (strain ATCC 204508 / S288c) (Baker's yeast).